Here is a 184-residue protein sequence, read N- to C-terminus: Dirigent protein 13 (184 aa).

Positions methionine 1–serine 25 are cleaved as a signal peptide. A disulfide bridge connects residues cysteine 36 and cysteine 182. Asparagine 55 and asparagine 119 each carry an N-linked (GlcNAc...) asparagine glycan.

The protein belongs to the plant dirigent protein family. Homodimer. As to expression, expressed in root vasculature and meristems, cotyledons, flowers, siliques, and leaf trichomes. Localized in the interfascicular/vascular cambia and developing xylem.

The protein resides in the secreted. It localises to the extracellular space. Its subcellular location is the apoplast. In terms of biological role, dirigent proteins impart stereoselectivity on the phenoxy radical-coupling reaction, yielding optically active lignans from two molecules of coniferyl alcohol in the biosynthesis of lignans, flavonolignans, and alkaloids and thus plays a central role in plant secondary metabolism. The chain is Dirigent protein 13 (DIR13) from Arabidopsis thaliana (Mouse-ear cress).